The following is a 238-amino-acid chain: Ubiquinone biosynthesis O-methyltransferase (238 aa).

S-adenosyl-L-methionine contacts are provided by R38, G57, D78, and L124.

Belongs to the methyltransferase superfamily. UbiG/COQ3 family.

It catalyses the reaction a 3-demethylubiquinol + S-adenosyl-L-methionine = a ubiquinol + S-adenosyl-L-homocysteine + H(+). It carries out the reaction a 3-(all-trans-polyprenyl)benzene-1,2-diol + S-adenosyl-L-methionine = a 2-methoxy-6-(all-trans-polyprenyl)phenol + S-adenosyl-L-homocysteine + H(+). It functions in the pathway cofactor biosynthesis; ubiquinone biosynthesis. In terms of biological role, O-methyltransferase that catalyzes the 2 O-methylation steps in the ubiquinone biosynthetic pathway. The chain is Ubiquinone biosynthesis O-methyltransferase from Marinobacter nauticus (strain ATCC 700491 / DSM 11845 / VT8) (Marinobacter aquaeolei).